The following is a 375-amino-acid chain: Succinyl-diaminopimelate desuccinylase (375 aa).

His66 is a Zn(2+) binding site. Residue Asp68 is part of the active site. Asp99 serves as a coordination point for Zn(2+). Glu133 acts as the Proton acceptor in catalysis. Zn(2+) contacts are provided by Glu134, Glu162, and His348.

It belongs to the peptidase M20A family. DapE subfamily. As to quaternary structure, homodimer. The cofactor is Zn(2+). Requires Co(2+) as cofactor.

The catalysed reaction is N-succinyl-(2S,6S)-2,6-diaminopimelate + H2O = (2S,6S)-2,6-diaminopimelate + succinate. It participates in amino-acid biosynthesis; L-lysine biosynthesis via DAP pathway; LL-2,6-diaminopimelate from (S)-tetrahydrodipicolinate (succinylase route): step 3/3. Its function is as follows. Catalyzes the hydrolysis of N-succinyl-L,L-diaminopimelic acid (SDAP), forming succinate and LL-2,6-diaminopimelate (DAP), an intermediate involved in the bacterial biosynthesis of lysine and meso-diaminopimelic acid, an essential component of bacterial cell walls. This Shigella dysenteriae serotype 1 (strain Sd197) protein is Succinyl-diaminopimelate desuccinylase.